Reading from the N-terminus, the 65-residue chain is Keratin-associated protein 23-1 (65 aa).

In terms of assembly, interacts with hair keratins.

Its function is as follows. In the hair cortex, hair keratin intermediate filaments are embedded in an interfilamentous matrix, consisting of hair keratin-associated proteins (KRTAP), which are essential for the formation of a rigid and resistant hair shaft through their extensive disulfide bond cross-linking with abundant cysteine residues of hair keratins. The matrix proteins include the high-sulfur and high-glycine-tyrosine keratins. This Homo sapiens (Human) protein is Keratin-associated protein 23-1 (KRTAP23-1).